The following is a 481-amino-acid chain: Argininosuccinate lyase (481 aa).

It belongs to the lyase 1 family. Argininosuccinate lyase subfamily.

It is found in the cytoplasm. The catalysed reaction is 2-(N(omega)-L-arginino)succinate = fumarate + L-arginine. It functions in the pathway amino-acid biosynthesis; L-arginine biosynthesis; L-arginine from L-ornithine and carbamoyl phosphate: step 3/3. In Methanococcus maripaludis (strain C5 / ATCC BAA-1333), this protein is Argininosuccinate lyase.